A 316-amino-acid chain; its full sequence is UDP-3-O-acylglucosamine N-acyltransferase 2 (316 aa).

H230 (proton acceptor) is an active-site residue.

The protein belongs to the transferase hexapeptide repeat family. LpxD subfamily. In terms of assembly, homotrimer.

The enzyme catalyses a UDP-3-O-[(3R)-3-hydroxyacyl]-alpha-D-glucosamine + a (3R)-hydroxyacyl-[ACP] = a UDP-2-N,3-O-bis[(3R)-3-hydroxyacyl]-alpha-D-glucosamine + holo-[ACP] + H(+). The protein operates within bacterial outer membrane biogenesis; LPS lipid A biosynthesis. Functionally, catalyzes the N-acylation of UDP-3-O-acylglucosamine using 3-hydroxyacyl-ACP as the acyl donor. Is involved in the biosynthesis of lipid A, a phosphorylated glycolipid that anchors the lipopolysaccharide to the outer membrane of the cell. The polypeptide is UDP-3-O-acylglucosamine N-acyltransferase 2 (Sulfurimonas denitrificans (strain ATCC 33889 / DSM 1251) (Thiomicrospira denitrificans (strain ATCC 33889 / DSM 1251))).